The following is a 212-amino-acid chain: Large ribosomal subunit protein uL1 (212 aa).

This sequence belongs to the universal ribosomal protein uL1 family. In terms of assembly, part of the 50S ribosomal subunit.

Binds directly to 23S rRNA. Probably involved in E site tRNA release. In terms of biological role, protein L1 is also a translational repressor protein, it controls the translation of its operon by binding to its mRNA. The polypeptide is Large ribosomal subunit protein uL1 (Natronomonas pharaonis (strain ATCC 35678 / DSM 2160 / CIP 103997 / JCM 8858 / NBRC 14720 / NCIMB 2260 / Gabara) (Halobacterium pharaonis)).